We begin with the raw amino-acid sequence, 250 residues long: UDP-2,3-diacylglucosamine hydrolase (250 aa).

Residues D8, H10, D41, N79, and H114 each contribute to the Mn(2+) site. Position 79-80 (79-80 (NR)) interacts with substrate. The substrate site is built by D122, S160, Q167, and H195. Positions 195 and 197 each coordinate Mn(2+).

This sequence belongs to the LpxH family. Mn(2+) serves as cofactor.

The protein localises to the cell inner membrane. The catalysed reaction is UDP-2-N,3-O-bis[(3R)-3-hydroxytetradecanoyl]-alpha-D-glucosamine + H2O = 2-N,3-O-bis[(3R)-3-hydroxytetradecanoyl]-alpha-D-glucosaminyl 1-phosphate + UMP + 2 H(+). Its pathway is glycolipid biosynthesis; lipid IV(A) biosynthesis; lipid IV(A) from (3R)-3-hydroxytetradecanoyl-[acyl-carrier-protein] and UDP-N-acetyl-alpha-D-glucosamine: step 4/6. In terms of biological role, hydrolyzes the pyrophosphate bond of UDP-2,3-diacylglucosamine to yield 2,3-diacylglucosamine 1-phosphate (lipid X) and UMP by catalyzing the attack of water at the alpha-P atom. Involved in the biosynthesis of lipid A, a phosphorylated glycolipid that anchors the lipopolysaccharide to the outer membrane of the cell. The sequence is that of UDP-2,3-diacylglucosamine hydrolase from Nitrosococcus oceani (strain ATCC 19707 / BCRC 17464 / JCM 30415 / NCIMB 11848 / C-107).